The following is a 1095-amino-acid chain: Tyrosine-sulfated glycopeptide receptor 1 (1095 aa).

A helical membrane pass occupies residues 23-43 (PHMVLFVLLYVLSISVFFLTV). 2 N-linked (GlcNAc...) asparagine glycosylation sites follow: asparagine 62 and asparagine 73. LRR repeat units lie at residues 91 to 115 (ENRV…VLDL), 116 to 139 (QRLS…FLSA), 141 to 165 (DQLL…SFGN), 170 to 195 (IFPI…VFLQ), 197 to 221 (AFNL…MCTA), 223 to 246 (PQLT…LSRC), 247 to 270 (SRLS…IYNL), 271 to 294 (PELE…ITRL), 295 to 318 (TKLT…IGKL), 320 to 342 (KLSS…LANC), 344 to 366 (KLVK…DFSR), 367 to 391 (FQSL…VYSC), 393 to 415 (MMTA…VLEL), 416 to 439 (ESLS…SILQ), 441 to 466 (CKKL…DFLR), 470 to 494 (FPSL…LIKL), 495 to 517 (QRVE…WLGT), 518 to 542 (LPDL…LFQL), and 566 to 589 (NPNN…IYIK). An N-linked (GlcNAc...) asparagine glycan is attached at asparagine 165. N-linked (GlcNAc...) asparagine glycosylation is found at asparagine 199, asparagine 204, and asparagine 207. Asparagine 258 is a glycosylation site (N-linked (GlcNAc...) asparagine). N-linked (GlcNAc...) asparagine glycosylation is present at asparagine 341. Residue asparagine 377 is glycosylated (N-linked (GlcNAc...) asparagine). An N-linked (GlcNAc...) asparagine glycan is attached at asparagine 430. Residues asparagine 569, asparagine 592, asparagine 616, asparagine 627, asparagine 640, asparagine 662, and asparagine 714 are each glycosylated (N-linked (GlcNAc...) asparagine). LRR repeat units lie at residues 604–628 (LKVL…LSNL), 629–652 (TNLE…LTGL), and 654–677 (FLSY…QFDT). A helical membrane pass occupies residues 721–741 (LVLGLFFGVSLILVLLALLVL). Threonine 792 and threonine 800 each carry phosphothreonine. Residues 803 to 1074 (FSQANIIGCG…PNIQQVVDWL (272 aa)) form the Protein kinase domain. ATP contacts are provided by residues 809-817 (IGCGGFGLV) and lysine 831. Phosphotyrosine is present on residues tyrosine 876 and tyrosine 916. Residue aspartate 929 is the Proton acceptor of the active site. Tyrosine 971 bears the Phosphotyrosine mark.

Belongs to the protein kinase superfamily. Ser/Thr protein kinase family. In terms of assembly, homo- and heterodimers with PSKR1. Interacts (via C-terminus) with AHA1 and AHA2 (via the R-domain). Post-translationally, autophosphorylated. As to expression, expressed ubiquitously, including in the shoot apical meristem and in the elongation zone of the root meristem.

The protein resides in the cell membrane. The catalysed reaction is L-seryl-[protein] + ATP = O-phospho-L-seryl-[protein] + ADP + H(+). It catalyses the reaction L-threonyl-[protein] + ATP = O-phospho-L-threonyl-[protein] + ADP + H(+). Tyrosine-sulfated glycopeptide receptor with a serine/threonine-protein kinase activity. Regulates, in response to tyrosine-sulfated glycopeptide binding, a signaling cascade involved in cellular proliferation and plant growth. Not involved in PSK perception. Involved in plant immunity, with antagonistic effects on bacterial and fungal resistances. Mediates activation of the plasma membrane H(+)-ATPase by PSY1. Phosphorylates AHA2 at Thr-881. The polypeptide is Tyrosine-sulfated glycopeptide receptor 1 (Arabidopsis thaliana (Mouse-ear cress)).